A 337-amino-acid chain; its full sequence is MNLKYLLLFFCLVQVLHYCYSHGDPSLSNELDRGLIPKCKLVPEQISFVLSTRENQNGVFLTLDNLSKGGILPKSDLSSIPVIFLIHGFISSANNSNYVDMTKALLEKNDCMVISIDWRDGACTHEFKILKFIGYPNAVKNTRAVGKYIADFTKLLMQKYKVSLANIRLIGHSLGAQIAGFAGKEYQKFKLGKYPEIIGLDPAGPLFKSNDCSERICETDAHYVQIIHTSNNLGTERTLGTVDFYVNNGYNQPGCYLSFLGEACSHTRAVKYFTECIRHECCLIGVPQSKNPQPVSKCTRKECVCIGLNAKTYPKTGSFYVPVESKAPYCNNKGKKI.

A signal peptide spans 1–21 (MNLKYLLLFFCLVQVLHYCYS). Residues 22-33 (HGDPSLSNELDR) constitute a propeptide that is removed on maturation. C39 and C123 are oxidised to a cystine. S173 functions as the Nucleophile in the catalytic mechanism. The Charge relay system role is filled by D201. Disulfide bonds link C212/C217 and C255/C264. H266 (charge relay system) is an active-site residue. Disulfide bonds link C281–C305, C282–C330, and C298–C303.

Belongs to the AB hydrolase superfamily. Lipase family. As to expression, expressed by the venom gland.

The protein resides in the secreted. The catalysed reaction is a 1,2-diacyl-sn-glycero-3-phosphocholine + H2O = a 2-acyl-sn-glycero-3-phosphocholine + a fatty acid + H(+). Catalyzes the hydrolysis of phosphatidylcholine with phospholipase A1 activity. May act as an allergen and induce hemolytic activity. In vivo, induces dose-dependent platelet aggregation (nanomolar concentration) and induces thrombosis. The sequence is that of Probable phospholipase A1 magnifin from Vespa magnifica (Hornet).